The following is a 319-amino-acid chain: MSLSPRSDRTEIRRSWGLDSIVSALSQASTDPLPHHLLSDQFYPLPSRESLGLILHGLRSVLFPRHFGDPELSVETTHYFIGNTLDKTLNLLNEQIRRELWLQHVTQGTPEATPAVLSQHASELTQAFAQALPEIKRLLDSDVNAAYLGDPAAQSISEILFCYPGITAITFHRLAHRLYQLGLPLLARITAEVSHSETGIDIHPGAAIGGSFFIDHGTGVVIGETCVIGDRVRIYQAVTLGAKSFPRDETGALIKGQARHPVIEDDVVIYAGATLLGRITVGRGSTIGGNVWLTRSVPAGSFISQAQIRSDNFESGGGI.

This sequence belongs to the transferase hexapeptide repeat family.

The protein localises to the cytoplasm. The catalysed reaction is L-serine + acetyl-CoA = O-acetyl-L-serine + CoA. Its pathway is amino-acid biosynthesis; L-cysteine biosynthesis; L-cysteine from L-serine: step 1/2. This Synechococcus elongatus (strain ATCC 33912 / PCC 7942 / FACHB-805) (Anacystis nidulans R2) protein is Serine acetyltransferase, plasmid (srpH).